A 920-amino-acid chain; its full sequence is MLIHLPRLLHRSFGARRSFLASLYHTQRGVYGFRPRDGPERRAELTQISALNRDHGLARLVEAYRAHGHKVAKINPLLPQSPVLESVPEISLLNGAVRGVLNTTGLRHFGKAEATAEEVVAYLESTYCGGISVETSQLQTLEEREWFADRFEELKKEAFSPEERRMLAKLMLESQEFDHFLATKFATVKRYGGEGAESMMGFFYELFRSSVYSGVTDVVMGMPHRGRLNLLTGLLQFPPELMFRKMRGLSEFPEHSPSIGDVLSHLTSTVELDFGAGHPLHVTMLPNPSHLEAINPVTQGKTRGRQQVKQDGDYSTDPHSRPGDKVICLQVHGDASFSGQGIVPETFTLSNLPHYRVGGSIHLIVNNQVGYTTPSERGRSSLYCSDVGKMVGCAIIHVNGDDAEEVLRATRLAVEYQRRFRKDVIVDLLCYRQWGHNELDEPFFTNPAMYKIIRSRKSIPDSYADQLISEGLMTDEERSQIKTSYYATLNNQLTNMTLYSPPPTNLQGRWGDLVEPQNRVSCWDTGVAQPLLQFVGAKSVDIPEEIILHSHLRKTHVQARLQKLEEGTKLDWSTAEALAFGTLLCQGFNIRISGQDVGRGTFSQRHAMVVCQETNDMFIPLNHISSEQKGHLEVCNSALSEEAVLGFEYGMSIAQPRLLPIWEAQFGDFFNGAQIIFDTFLSGGEAKWLLQSGLVILLPHGYDGAGPEHSSCRIERFLQLCDSKEEGVDGDTVNMAVVNPTLPAQYFHLLRRQMIRNFRKPLIVASPKTLLRFSGAVSGLSDMGPGTSFKPIIGDSSVNPASVQRVLFCSGKHYYALLKHRETIPEAEKNTALVRVEELCPFPTEALQQELNKYTNAKEFIWSQEEPQNMGCWSFVSPRFEKQLACKLRLVSRPALPAPAVGIGTLHHQQHEAILTSSFS.

Positions 299-322 (QGKTRGRQQVKQDGDYSTDPHSRP) are disordered. Residues 308-322 (VKQDGDYSTDPHSRP) show a composition bias toward basic and acidic residues.

The protein belongs to the alpha-ketoglutarate dehydrogenase family. As to quaternary structure, the 2-oxoadipate dehydrogenase complex is composed of OADH (2-oxoadipate dehydrogenase; E1a), DLST (dihydrolipoamide succinyltransferase; E2) and DLD (dihydrolipoamide dehydrogenase; E3). E1a functional unit is a dimer. It depends on thiamine diphosphate as a cofactor.

It is found in the mitochondrion. It catalyses the reaction N(6)-[(R)-lipoyl]-L-lysyl-[protein] + 2-oxoadipate + H(+) = N(6)-[(R)-S(8)-glutaryldihydrolipoyl]-L-lysyl-[protein] + CO2. It participates in amino-acid degradation. Functionally, 2-oxoadipate dehydrogenase (E1a) component of the 2-oxoadipate dehydrogenase complex (OADHC). Participates in the first step, rate limiting for the overall conversion of 2-oxoadipate (alpha-ketoadipate) to glutaryl-CoA and CO(2) catalyzed by the whole OADHC. Catalyzes the irreversible decarboxylation of 2-oxoadipate via the thiamine diphosphate (ThDP) cofactor and subsequent transfer of the decarboxylated acyl intermediate on an oxidized dihydrolipoyl group that is covalently amidated to the E2 enzyme (dihydrolipoyllysine-residue succinyltransferase or DLST). Can catalyze the decarboxylation of 2-oxoglutarate in vitro, but at a much lower rate than 2-oxoadipate. Responsible for the last step of L-lysine, L-hydroxylysine and L-tryptophan catabolism with the common product being 2-oxoadipate. This is 2-oxoadipate dehydrogenase complex component E1 (dhtkd1) from Danio rerio (Zebrafish).